Here is a 388-residue protein sequence, read N- to C-terminus: Succinate--CoA ligase [ADP-forming] subunit beta (388 aa).

The ATP-grasp domain occupies 9-244 (KEIFARYGLP…PTQESELEVK (236 aa)). Residues Lys-46, 53-55 (GRG), Glu-99, Thr-102, and Glu-107 each bind ATP. Positions 199 and 213 each coordinate Mg(2+). Substrate is bound by residues Asn-264 and 321–323 (GIL).

The protein belongs to the succinate/malate CoA ligase beta subunit family. In terms of assembly, heterotetramer of two alpha and two beta subunits. Mg(2+) serves as cofactor.

It catalyses the reaction succinate + ATP + CoA = succinyl-CoA + ADP + phosphate. It carries out the reaction GTP + succinate + CoA = succinyl-CoA + GDP + phosphate. The protein operates within carbohydrate metabolism; tricarboxylic acid cycle; succinate from succinyl-CoA (ligase route): step 1/1. Its function is as follows. Succinyl-CoA synthetase functions in the citric acid cycle (TCA), coupling the hydrolysis of succinyl-CoA to the synthesis of either ATP or GTP and thus represents the only step of substrate-level phosphorylation in the TCA. The beta subunit provides nucleotide specificity of the enzyme and binds the substrate succinate, while the binding sites for coenzyme A and phosphate are found in the alpha subunit. This Persephonella marina (strain DSM 14350 / EX-H1) protein is Succinate--CoA ligase [ADP-forming] subunit beta.